The chain runs to 98 residues: Putative protein adenylyltransferase MJ0128 (98 aa).

The GSX(10)DXD motif signature appears at 31–45 (GSYARNEQTEKSDID). Positions 43, 45, and 75 each coordinate Mg(2+).

Belongs to the MntA antitoxin family. In terms of assembly, probably forms a complex with cognate toxin MJ0127. It depends on Mg(2+) as a cofactor.

It carries out the reaction L-tyrosyl-[protein] + ATP = O-(5'-adenylyl)-L-tyrosyl-[protein] + diphosphate. The enzyme catalyses O-(5'-adenylyl)-L-tyrosyl-[protein] + ATP = O-[5'-(adenylyl-(5'-&gt;3')-adenylyl)]-L-tyrosyl-[protein] + diphosphate. In terms of biological role, probable antitoxin component of a putative type VII toxin-antitoxin (TA) system. Neutralizes cognate toxic MJ0127 by di-AMPylation. The protein is Putative protein adenylyltransferase MJ0128 of Methanocaldococcus jannaschii (strain ATCC 43067 / DSM 2661 / JAL-1 / JCM 10045 / NBRC 100440) (Methanococcus jannaschii).